Reading from the N-terminus, the 406-residue chain is Replication protein (406 aa).

Is involved in replication of pIP404. This chain is Replication protein (rep), found in Clostridium perfringens.